The chain runs to 144 residues: Universal stress protein A homolog 1 (144 aa).

Belongs to the universal stress protein A family. Homodimer.

It localises to the cytoplasm. Its function is as follows. Involved in stress response. This is Universal stress protein A homolog 1 (uspA1) from Coxiella burnetii (strain RSA 493 / Nine Mile phase I).